The following is a 239-amino-acid chain: Phosphoribosylaminoimidazole-succinocarboxamide synthase (239 aa).

The protein belongs to the SAICAR synthetase family.

It catalyses the reaction 5-amino-1-(5-phospho-D-ribosyl)imidazole-4-carboxylate + L-aspartate + ATP = (2S)-2-[5-amino-1-(5-phospho-beta-D-ribosyl)imidazole-4-carboxamido]succinate + ADP + phosphate + 2 H(+). It functions in the pathway purine metabolism; IMP biosynthesis via de novo pathway; 5-amino-1-(5-phospho-D-ribosyl)imidazole-4-carboxamide from 5-amino-1-(5-phospho-D-ribosyl)imidazole-4-carboxylate: step 1/2. The chain is Phosphoribosylaminoimidazole-succinocarboxamide synthase from Bacillus cereus (strain B4264).